A 308-amino-acid polypeptide reads, in one-letter code: L-lactate dehydrogenase 2 (308 aa).

NAD(+)-binding positions include Val-13, Asp-34, Arg-39, Tyr-64, and 78 to 79 (GV). Arg-87 serves as a coordination point for substrate. Position 100 (Thr-100) interacts with NAD(+). 119-122 (NPVD) is a binding site for substrate. Thr-142 provides a ligand contact to NAD(+). 147-150 (DSMR) provides a ligand contact to substrate. His-174 acts as the Proton acceptor in catalysis. Residue Thr-224 coordinates substrate.

Belongs to the LDH/MDH superfamily. LDH family. In terms of assembly, homotetramer.

The protein resides in the cytoplasm. The catalysed reaction is (S)-lactate + NAD(+) = pyruvate + NADH + H(+). It participates in fermentation; pyruvate fermentation to lactate; (S)-lactate from pyruvate: step 1/1. Its function is as follows. Catalyzes the conversion of lactate to pyruvate. The protein is L-lactate dehydrogenase 2 of Lactobacillus acidophilus (strain ATCC 700396 / NCK56 / N2 / NCFM).